A 9904-amino-acid chain; its full sequence is Extracellular matrix-binding protein ebh (9904 aa).

A signal peptide spans 1-39 (MNYRDKIQKFSIRKYTVGTFSTVIATLVFLGFNTSQAHA). Over residues 41–59 (ETNQPASVVKQKQQSNNEQ) the composition is skewed to polar residues. Disordered regions lie at residues 41 to 153 (ETNQ…NDNR) and 250 to 277 (PQRQQTSRRSNRIQTRSVESRAAEPRSV). Low complexity predominate over residues 65-78 (SQVQNSQNSQNSQS). Positions 79-117 (LSATHENEQPNISQANLVDQKVAQSSTTNDEQPASQNVN) are enriched in polar residues. The span at 130-140 (PDKEEGKHKQN) shows a compositional bias: basic and acidic residues. 2 stretches are compositionally biased toward polar residues: residues 141–151 (ESQSANKNGND) and 250–266 (PQRQQTSRRSNRIQTRS). FIVAR domains follow at residues 2524–2580 (AKNH…VSDA), 2610–2666 (SKNN…ISEE), 2687–2750 (DTHT…VQTA), 2780–2836 (AKTK…IAEE), 2864–2919 (AKTQ…IRQN), 2947–3002 (AKNQ…INTN), 3030–3085 (AKTQ…INDK), 3154–3212 (AMTK…VNQK), 3280–3339 (AMTG…VNNA), 3407–3465 (AMGN…VNRA), 3533–3591 (AMGN…VTEA), 3659–3717 (AMNT…ITQK), 3785–3843 (AMAS…VEAA), 3911–3969 (AMGN…VEQA), 4037–4095 (AMGT…VTAA), 4160–4208 (DKDA…VDNA), 4276–4334 (AMGA…INGM), 4402–4460 (AMTA…VNSA), 4528–4586 (AMKG…ITQA), 4654–4712 (AMHS…VEQA), 4780–4838 (AMGQ…VERA), 4906–4964 (AMTA…VTNA), 5032–5090 (AMKG…INQA), 5158–5216 (AMTN…VESA), 5284–5342 (AMSN…VEQA), 5410–5468 (AMNQ…INQK), 5536–5593 (AMGN…VQAA), 5661–5719 (AMGQ…VEAA), 5787–5845 (AMQR…VEQA), 5913–5971 (AMDQ…VTAA), 6039–6097 (AMNQ…VTQA), 6175–6223 (DKDQ…VEAA), 6291–6349 (AMGN…VEAA), 6417–6475 (AMDK…INQA), 6543–6601 (AMGN…VEQA), 6669–6727 (AMTQ…ITAA), 6795–6853 (AMTQ…IQQA), 6921–6979 (AMTN…VEQA), 7047–7105 (AMTQ…VAQA), 7173–7231 (AMGT…VTQA), 7299–7357 (AMGN…ITRA), 7425–7486 (AMDQ…ITNE), 7551–7609 (AMEL…VNGA), 7677–7735 (AMGN…VEQA), 7803–7860 (AMHG…INQA), 7928–7986 (LMDA…VSSA), 8054–8112 (AIKA…IDQA), 8180–8238 (AMEA…VEQL), 8306–8364 (AMQA…VEQL), 8432–8490 (AMET…VEQA), 8558–8612 (SMDQ…VDQA), 8680–8739 (AMDQ…VIKL), and 8934–8990 (AMET…INGA). Residues 9710 to 9730 (IKNAIGVVGISGLLASFWFFI) form a helical membrane-spanning segment. Residues 9807–9904 (RRKEDEEDVE…KKKKSKKNKK (98 aa)) form a disordered region. Composition is skewed to basic and acidic residues over residues 9822–9832 (TDEKVLKDNEH) and 9871–9881 (QKDNQSKDKKS). A compositionally biased stretch (basic residues) spans 9886–9904 (TSKKVAAKKKKKKSKKNKK).

Its subcellular location is the cell membrane. The sequence is that of Extracellular matrix-binding protein ebh (ebh) from Staphylococcus aureus (strain MW2).